The sequence spans 72 residues: MLALTRKKGESLVINNDIEITILEIRGDQIKLGVSAPKEVPIYRKEVYTQIQQENRKSADAQNAQALKELFG.

This sequence belongs to the CsrA/RsmA family. In terms of assembly, homodimer; the beta-strands of each monomer intercalate to form a hydrophobic core, while the alpha-helices form wings that extend away from the core.

It is found in the cytoplasm. Functionally, a translational regulator that binds mRNA to regulate translation initiation and/or mRNA stability. Usually binds in the 5'-UTR at or near the Shine-Dalgarno sequence preventing ribosome-binding, thus repressing translation. Its main target seems to be the major flagellin gene, while its function is anatagonized by FliW. In Agathobacter rectalis (strain ATCC 33656 / DSM 3377 / JCM 17463 / KCTC 5835 / VPI 0990) (Eubacterium rectale), this protein is Translational regulator CsrA.